The sequence spans 219 residues: Large ribosomal subunit protein uL3 (219 aa).

The protein belongs to the universal ribosomal protein uL3 family. As to quaternary structure, part of the 50S ribosomal subunit. Forms a cluster with proteins L14 and L19.

One of the primary rRNA binding proteins, it binds directly near the 3'-end of the 23S rRNA, where it nucleates assembly of the 50S subunit. This chain is Large ribosomal subunit protein uL3, found in Salinispora arenicola (strain CNS-205).